The sequence spans 163 residues: Nucleotide-binding protein Bcer98_0876 (163 aa).

The protein belongs to the YajQ family.

Nucleotide-binding protein. This is Nucleotide-binding protein Bcer98_0876 from Bacillus cytotoxicus (strain DSM 22905 / CIP 110041 / 391-98 / NVH 391-98).